The sequence spans 164 residues: E3 ubiquitin ligase complex SCF subunit sconC (164 aa).

An interaction with the F-box domain of F-box proteins region spans residues 106–164; it reads ILAANYLDIKALLDVGCKTVANMIKGKSPEEIRKTFNIQNDFTPEEEDQIRRENEWAEE.

This sequence belongs to the SKP1 family. In terms of assembly, component of the SCF (SKP1-CUL1-F-box protein) E3 ubiquitin ligase complexes.

It functions in the pathway protein modification; protein ubiquitination. Its function is as follows. Essential component of the SCF (SKP1-CUL1-F-box protein) E3 ubiquitin ligase complexes, which mediate the ubiquitination and subsequent proteasomal degradation of target proteins. Controls sulfur metabolite repression, probably by mediating the inactivation or degradation of the metR transcription factor. The protein is E3 ubiquitin ligase complex SCF subunit sconC (sconC) of Arthroderma benhamiae (strain ATCC MYA-4681 / CBS 112371) (Trichophyton mentagrophytes).